The sequence spans 460 residues: Argininosuccinate lyase (460 aa).

Belongs to the lyase 1 family. Argininosuccinate lyase subfamily.

Its subcellular location is the cytoplasm. The enzyme catalyses 2-(N(omega)-L-arginino)succinate = fumarate + L-arginine. It functions in the pathway amino-acid biosynthesis; L-arginine biosynthesis; L-arginine from L-ornithine and carbamoyl phosphate: step 3/3. The polypeptide is Argininosuccinate lyase (Campylobacter hominis (strain ATCC BAA-381 / DSM 21671 / CCUG 45161 / LMG 19568 / NCTC 13146 / CH001A)).